The following is a 230-amino-acid chain: Cytidylate kinase (230 aa).

Residue 10–18 (GPAGSGKST) participates in ATP binding.

The protein belongs to the cytidylate kinase family. Type 1 subfamily.

Its subcellular location is the cytoplasm. It catalyses the reaction CMP + ATP = CDP + ADP. It carries out the reaction dCMP + ATP = dCDP + ADP. This chain is Cytidylate kinase, found in Leptospira borgpetersenii serovar Hardjo-bovis (strain L550).